The sequence spans 146 residues: Large ribosomal subunit protein uL15 (146 aa).

A disordered region spans residues 1-57 (MKLHELKPAQGSRKTRNRVGRGSSSGNGKTAGRGQKGQKARSGGNIRSGFEGGQTPL). Residues 23-35 (SSSGNGKTAGRGQ) are compositionally biased toward gly residues.

This sequence belongs to the universal ribosomal protein uL15 family. As to quaternary structure, part of the 50S ribosomal subunit.

Functionally, binds to the 23S rRNA. The protein is Large ribosomal subunit protein uL15 of Streptococcus mutans serotype c (strain ATCC 700610 / UA159).